A 393-amino-acid polypeptide reads, in one-letter code: uncharacterized protein (393 aa).

The 140-residue stretch at Ala250 to Ala389 folds into the Flavodoxin-like domain.

This is an uncharacterized protein from Methanocaldococcus jannaschii (strain ATCC 43067 / DSM 2661 / JAL-1 / JCM 10045 / NBRC 100440) (Methanococcus jannaschii).